Consider the following 393-residue polypeptide: Protein TsgA (393 aa).

12 consecutive transmembrane segments (helical) span residues 11–31 (WISF…GMVM), 51–71 (FLNA…EIVP), 78–98 (FGFL…SLAL), 101–121 (AAMF…TFLV), 134–154 (LLFT…IAAF), 162–182 (WYWV…LTFG), 206–226 (IGVL…LGFI), 245–265 (TLVS…SFIL), 273–293 (ILTV…TGTP), 297–317 (AWSI…IITL), 332–352 (FVLT…GPIV), and 361–381 (LLTA…LGFV).

It belongs to the major facilitator superfamily. TsgA family.

The protein resides in the cell inner membrane. This chain is Protein TsgA, found in Escherichia coli O6:K15:H31 (strain 536 / UPEC).